The primary structure comprises 85 residues: Type 3 secretion system needle filament protein (85 aa).

Residues 13-41 (LDTVANALKEQANAANKDVNDAIKALQGT) adopt a coiled-coil conformation.

In terms of assembly, the core secretion machinery of the T3SS is composed of approximately 20 different proteins, including cytoplasmic components, a base, an export apparatus and a needle. This subunit polymerizes and forms the helical needle filament. Forms a stable heterotrimeric complex with PscE and PscG in the cytoplasm, blocking it in a monomeric state and preventing its polymerization.

It localises to the secreted. The protein localises to the cell surface. Component of the type III secretion system (T3SS), also called injectisome, which is used to inject bacterial effector proteins into eukaryotic host cells, facilitating the establishment and dissemination of infection. PscF/SctF forms the external needle filament that protrudes from the bacterial surface. The sequence is that of Type 3 secretion system needle filament protein from Pseudomonas aeruginosa (strain ATCC 15692 / DSM 22644 / CIP 104116 / JCM 14847 / LMG 12228 / 1C / PRS 101 / PAO1).